The chain runs to 132 residues: Acid shock protein (132 aa).

The first 21 residues, 1 to 21 (MKKVLALVVAAAMGLSSAAFA), serve as a signal peptide directing secretion. Over residues 20-45 (FAAETTTSSAAPATATATTTKAAPAK) the composition is skewed to low complexity. The tract at residues 20-132 (FAAETTTSSA…AAKPAAQPAA (113 aa)) is disordered. The propeptide occupies 22–90 (AETTTSSAAP…TTAPVEQKAQ (69 aa)). Residues 62 to 71 (AAKKHHKKAV) are compositionally biased toward basic residues. 2 stretches are compositionally biased toward low complexity: residues 76-90 (AAPATTTAPVEQKAQ) and 100-109 (AKPAVAQKAQ). The span at 110-119 (AAKKHHKKAV) shows a compositional bias: basic residues.

The protein belongs to the Asr family. Proteolytic processing gives rise to the active protein.

The protein resides in the periplasm. Its function is as follows. Required for growth and/or survival at acidic conditions. This Enterobacter sp. (strain 638) protein is Acid shock protein.